The following is a 378-amino-acid chain: Anhydro-N-acetylmuramic acid kinase (378 aa).

9–16 (GTSADGID) contacts ATP.

This sequence belongs to the anhydro-N-acetylmuramic acid kinase family.

The enzyme catalyses 1,6-anhydro-N-acetyl-beta-muramate + ATP + H2O = N-acetyl-D-muramate 6-phosphate + ADP + H(+). Its pathway is amino-sugar metabolism; 1,6-anhydro-N-acetylmuramate degradation. The protein operates within cell wall biogenesis; peptidoglycan recycling. In terms of biological role, catalyzes the specific phosphorylation of 1,6-anhydro-N-acetylmuramic acid (anhMurNAc) with the simultaneous cleavage of the 1,6-anhydro ring, generating MurNAc-6-P. Is required for the utilization of anhMurNAc either imported from the medium or derived from its own cell wall murein, and thus plays a role in cell wall recycling. This Prochlorococcus marinus (strain NATL1A) protein is Anhydro-N-acetylmuramic acid kinase.